The following is a 95-amino-acid chain: Small ribosomal subunit protein bS6 (95 aa).

Belongs to the bacterial ribosomal protein bS6 family.

In terms of biological role, binds together with bS18 to 16S ribosomal RNA. This chain is Small ribosomal subunit protein bS6 (rpsF), found in Halalkalibacterium halodurans (strain ATCC BAA-125 / DSM 18197 / FERM 7344 / JCM 9153 / C-125) (Bacillus halodurans).